We begin with the raw amino-acid sequence, 313 residues long: Olfactory receptor 2B6 (313 aa).

Over 1–25 (MNWVNDSIIQEFILLGFSDRPWLEF) the chain is Extracellular. N5 is a glycosylation site (N-linked (GlcNAc...) asparagine). Residues 26–49 (PLLVVFLISYTVTIFGNLTIILVS) traverse the membrane as a helical segment. Over 50–57 (RLDTKLHT) the chain is Cytoplasmic. A helical membrane pass occupies residues 58-79 (PMYFFLTNLSLLDLCYTTCTVP). Over 80-100 (QMLVNLCSIRKVISYRGCVAQ) the chain is Extracellular. A disulfide bond links C97 and C189. Residues 101–120 (LFIFLALGATEYLLLAVMSF) traverse the membrane as a helical segment. Topologically, residues 121-139 (DRFVAICRPLHYSVIMHQR) are cytoplasmic. Residues 140 to 158 (LCLQLAAASWVTGFSNSVW) traverse the membrane as a helical segment. The Extracellular segment spans residues 159–195 (LSTLTLQLPLCDPYVIDHFLCEVPALLKLSCVETTAN). The chain crosses the membrane as a helical span at residues 196–219 (EAELFLVSELFHLIPLTLILISYA). Residues 220–236 (FIVRAVLRIQSAEGRQK) are Cytoplasmic-facing. The helical transmembrane segment at 237 to 259 (AFGTCGSHLIVVSLFYSTAVSVY) threads the bilayer. Topologically, residues 260-272 (LQPPSPSSKDQGK) are extracellular. Residues 273–292 (MVSLFYGIIAPMLNPLIYTL) traverse the membrane as a helical segment. The Cytoplasmic segment spans residues 293–313 (RNKEVKEGFKRLVARVFLIKK).

Belongs to the G-protein coupled receptor 1 family.

The protein resides in the cell membrane. In terms of biological role, odorant receptor. This Homo sapiens (Human) protein is Olfactory receptor 2B6.